The following is a 36-amino-acid chain: Pancreatic polypeptide (36 aa).

A Phenylalanine amide modification is found at Phe36.

This sequence belongs to the NPY family.

Its subcellular location is the secreted. Its function is as follows. Hormone secreted by pancreatic cells that acts as a regulator of pancreatic and gastrointestinal functions. This chain is Pancreatic polypeptide (ppy), found in Alligator mississippiensis (American alligator).